A 367-amino-acid chain; its full sequence is MTPEILPIDQYDAQLEEKTGRLGAMMAPFDAPAPAVFRSPVSHYRMRAEFRIWHDGDDLYHIMFDQQTKQRIRVDQFPAASELINRLMPVLLNALRAEPVLRRKLFQLDYLSTLSGEIAVSLLYHKALDDEWRQRARELCDELRAQGFALQLIGRATKTKICLDRDYVDECLPVAGRQMIYRQVENSFTQPNAMMNIQMLEWALSVTQGSTGDLLELYCGNGNFSLALARNFERVLATEIAKPSVAAAQYNIAANQIDNVQIIRMAAEEFTQAMNGVRQFNRLQGIDLAGYRCETIFVDPPRSGLDDGTAKLVQAYPRILYISCNPETLCANLETLSQTHRISQLALFDQFPYTHHMECGVLLEKRQ.

S-adenosyl-L-methionine-binding residues include glutamine 190, tyrosine 218, asparagine 223, glutamate 239, and aspartate 299. Cysteine 324 (nucleophile) is an active-site residue. The active-site Proton acceptor is the glutamate 358.

Belongs to the class I-like SAM-binding methyltransferase superfamily. RNA M5U methyltransferase family. TrmA subfamily.

The enzyme catalyses uridine(54) in tRNA + S-adenosyl-L-methionine = 5-methyluridine(54) in tRNA + S-adenosyl-L-homocysteine + H(+). It catalyses the reaction uridine(341) in tmRNA + S-adenosyl-L-methionine = 5-methyluridine(341) in tmRNA + S-adenosyl-L-homocysteine + H(+). In terms of biological role, dual-specificity methyltransferase that catalyzes the formation of 5-methyluridine at position 54 (m5U54) in all tRNAs, and that of position 341 (m5U341) in tmRNA (transfer-mRNA). The protein is tRNA/tmRNA (uracil-C(5))-methyltransferase of Dickeya chrysanthemi (strain Ech1591) (Dickeya zeae (strain Ech1591)).